The chain runs to 174 residues: Male-enhanced antigen 1 (174 aa).

2 disordered regions span residues 1-83 and 95-123; these read MAAV…DGAA and HLPD…IPMD. Acidic residues-rich tracts occupy residues 38-48, 65-82, and 101-110; these read SSEEPEEEQEE, PEQE…EDGA, and LESEDEDEEG. Serine 103 carries the phosphoserine modification.

As to expression, highly expressed in testis. Transcripts can be found in primary and secondary spermatocytes, and spermatids, but the protein itself is only detected in spermatids. No expression in Leydig cells, spermatogonia, or sperm. Very weak expression in the heart, kidney, spleen, thymus and ovary.

May play an important role in spermatogenesis and/or testis development. In Mus musculus (Mouse), this protein is Male-enhanced antigen 1 (Mea1).